Here is a 266-residue protein sequence, read N- to C-terminus: ATP synthase subunit a (266 aa).

Helical transmembrane passes span 41-61 (IDTL…FWLA), 98-118 (VIAP…LMDL), 119-139 (VPID…WKIL), 152-172 (LSVL…GGWL), 178-198 (HPLG…EFIA), 216-236 (LVFI…GTPW), and 237-257 (AIFH…LTVV).

This sequence belongs to the ATPase A chain family. F-type ATPases have 2 components, CF(1) - the catalytic core - and CF(0) - the membrane proton channel. CF(1) has five subunits: alpha(3), beta(3), gamma(1), delta(1), epsilon(1). CF(0) has three main subunits: a(1), b(2) and c(9-12). The alpha and beta chains form an alternating ring which encloses part of the gamma chain. CF(1) is attached to CF(0) by a central stalk formed by the gamma and epsilon chains, while a peripheral stalk is formed by the delta and b chains.

It is found in the cell inner membrane. In terms of biological role, key component of the proton channel; it plays a direct role in the translocation of protons across the membrane. The protein is ATP synthase subunit a of Halorhodospira halophila (strain DSM 244 / SL1) (Ectothiorhodospira halophila (strain DSM 244 / SL1)).